A 327-amino-acid chain; its full sequence is Fe-S cluster assembly protein DRE2 (327 aa).

Positions 1–14 (MSPATVTIDTTPDF) are enriched in polar residues. Disordered regions lie at residues 1–20 (MSPATVTIDTTPDFSNGGAP) and 153–179 (NKGEGGGPVQSPAAATQPTAPAPAAAA). An N-terminal SAM-like domain region spans residues 17–144 (GGAPHSTLLL…EKPAEEVAAV (128 aa)). The interval 145–214 (PLKFLKKKNK…EDELMTEEDL (70 aa)) is linker. Low complexity predominate over residues 164–179 (PAAATQPTAPAPAAAA). [2Fe-2S] cluster contacts are provided by Cys224, Cys235, Cys238, and Cys240. The segment at 224–240 (CAPKPGKKRRACKDCTC) is fe-S binding site A. Residues Cys290, Cys293, Cys301, and Cys304 each coordinate [4Fe-4S] cluster. 2 consecutive short sequence motifs (cx2C motif) follow at residues 290–293 (CGSC) and 301–304 (CADC). The tract at residues 290–304 (CGSCALGDAFRCADC) is fe-S binding site B.

It belongs to the anamorsin family. Monomer. Interacts with TAH18. Interacts with MIA40. It depends on [2Fe-2S] cluster as a cofactor. [4Fe-4S] cluster serves as cofactor.

It is found in the cytoplasm. It localises to the mitochondrion intermembrane space. Component of the cytosolic iron-sulfur (Fe-S) protein assembly (CIA) machinery required for the maturation of extramitochondrial Fe-S proteins. Part of an electron transfer chain functioning in an early step of cytosolic Fe-S biogenesis, facilitating the de novo assembly of a [4Fe-4S] cluster on the scaffold complex CFD1-NBP35. Electrons are transferred to DRE2 from NADPH via the FAD- and FMN-containing protein TAH18. TAH18-DRE2 are also required for the assembly of the diferric tyrosyl radical cofactor of ribonucleotide reductase (RNR), probably by providing electrons for reduction during radical cofactor maturation in the catalytic small subunit RNR2. The sequence is that of Fe-S cluster assembly protein DRE2 from Pyricularia oryzae (strain 70-15 / ATCC MYA-4617 / FGSC 8958) (Rice blast fungus).